The following is a 519-amino-acid chain: 2,3-bisphosphoglycerate-independent phosphoglycerate mutase (519 aa).

Aspartate 18 and serine 68 together coordinate Mn(2+). Serine 68 (phosphoserine intermediate) is an active-site residue. Substrate-binding positions include histidine 129, 159–160 (RD), arginine 191, arginine 197, 267–270 (RADR), and lysine 341. Mn(2+) is bound by residues aspartate 408, histidine 412, aspartate 449, histidine 450, and histidine 468.

It belongs to the BPG-independent phosphoglycerate mutase family. Monomer. Mn(2+) serves as cofactor.

The catalysed reaction is (2R)-2-phosphoglycerate = (2R)-3-phosphoglycerate. Its pathway is carbohydrate degradation; glycolysis; pyruvate from D-glyceraldehyde 3-phosphate: step 3/5. Its function is as follows. Catalyzes the interconversion of 2-phosphoglycerate and 3-phosphoglycerate. This chain is 2,3-bisphosphoglycerate-independent phosphoglycerate mutase, found in Coxiella burnetii (strain RSA 493 / Nine Mile phase I).